The following is a 210-amino-acid chain: Na(+)-translocating NADH-quinone reductase subunit D (210 aa).

5 consecutive transmembrane segments (helical) span residues 42-62, 72-92, 103-123, 131-151, and 178-198; these read FVMT…ISLI, IIAQ…VLKA, VFVG…AYAM, FLDG…VATV, and NGLL…IWGV.

The protein belongs to the NqrDE/RnfAE family. In terms of assembly, composed of six subunits; NqrA, NqrB, NqrC, NqrD, NqrE and NqrF.

It localises to the cell inner membrane. The enzyme catalyses a ubiquinone + n Na(+)(in) + NADH + H(+) = a ubiquinol + n Na(+)(out) + NAD(+). Its function is as follows. NQR complex catalyzes the reduction of ubiquinone-1 to ubiquinol by two successive reactions, coupled with the transport of Na(+) ions from the cytoplasm to the periplasm. NqrA to NqrE are probably involved in the second step, the conversion of ubisemiquinone to ubiquinol. This Aeromonas hydrophila subsp. hydrophila (strain ATCC 7966 / DSM 30187 / BCRC 13018 / CCUG 14551 / JCM 1027 / KCTC 2358 / NCIMB 9240 / NCTC 8049) protein is Na(+)-translocating NADH-quinone reductase subunit D.